The sequence spans 69 residues: Arabinogalactan protein 24 (69 aa).

Residues 1–25 (MMMMTKMFVQIAVVCLLATMAVVSA) form the signal peptide. Pro-34, Pro-36, Pro-38, and Pro-40 each carry 4-hydroxyproline. O-linked (Ara...) hydroxyproline glycans are attached at residues Pro-34, Pro-36, Pro-38, and Pro-40. Ser-42 is lipidated: GPI-anchor amidated serine. A propeptide spans 43 to 69 (SSTVVSATNMFTVLAIAAVALVVGSNH) (removed in mature form).

It belongs to the AG-peptide AGP family. In terms of processing, contains 4-hydroxyproline; hydroxylated on Pro-34, Pro-36, Pro-38 and Pro-40. O-glycosylated on hydroxyprolines; noncontiguous hydroxylproline residues are glycosylated with arabinogalactan.

The protein resides in the cell membrane. Its function is as follows. Proteoglycan that seems to be implicated in diverse developmental roles such as differentiation, cell-cell recognition, embryogenesis and programmed cell death. The polypeptide is Arabinogalactan protein 24 (Arabidopsis thaliana (Mouse-ear cress)).